Here is a 160-residue protein sequence, read N- to C-terminus: MSVVASGRVAANLQRLGIKLPAAAAPATNYVSYVCSGMQLHVSGQLPKNDVGGCMTGQLGASLTVTEGQAAARACALQVVSQMQAALGDLDRVKRVVKLNVFVNSSPSFTEQSYVANGASDLILSVFGEEVGRHARCAVGVAQLPFGAAVEVDALVELNN.

The protein localises to the cytoplasm. In Trypanosoma cruzi, this protein is Protein TCP17.